A 641-amino-acid polypeptide reads, in one-letter code: 1,3-beta-glucanosyltransferase PGA5 (641 aa).

Residues Met1–Ser23 form the signal peptide. Asn25 is a glycosylation site (N-linked (GlcNAc...) asparagine). Cys106 and Cys135 are disulfide-bonded. 5 residues coordinate (1,3-beta-D-glucosyl)n: Tyr124, Asn192, Glu193, Asp234, and Arg239. Glu193 acts as the Proton donor in catalysis. Intrachain disulfides connect Cys248–Cys390, Cys276–Cys307, Cys424–Cys474, Cys426–Cys528, Cys433–Cys498, and Cys451–Cys456. Glu304 functions as the Nucleophile in the catalytic mechanism. Tyr336 lines the (1,3-beta-D-glucosyl)n pocket. A disordered region spans residues Lys535–Gly613. Residues Lys571–Ile581 show a composition bias toward basic and acidic residues. Residues Glu582–Glu593 are compositionally biased toward acidic residues. A compositionally biased stretch (polar residues) spans Lys596–Ser610. Asn621 is a glycosylation site (N-linked (GlcNAc...) asparagine). The GPI-anchor amidated aspartate moiety is linked to residue Asp622. Positions Ser623 to Ile641 are cleaved as a propeptide — removed in mature form.

The protein belongs to the glycosyl hydrolase 72 family.

It localises to the cell membrane. Its function is as follows. Splits internally a 1,3-beta-glucan molecule and transfers the newly generated reducing end (the donor) to the non-reducing end of another 1,3-beta-glucan molecule (the acceptor) forming a 1,3-beta linkage, resulting in the elongation of 1,3-beta-glucan chains in the cell wall. Involved in spore wall assembly. The sequence is that of 1,3-beta-glucanosyltransferase PGA5 (PGA5) from Candida albicans (strain SC5314 / ATCC MYA-2876) (Yeast).